Here is a 70-residue protein sequence, read N- to C-terminus: MGSFSIWHWLIVLVVVALLFGGRGRLSGIMGDAAKGIRAFRDGLKGESEQAEDETAKPLPKERDKDSARG.

The helical transmembrane segment at Met1 to Gly21 threads the bilayer. Residues Lys45–Gly70 are disordered.

It belongs to the TatA/E family. As to quaternary structure, the Tat system comprises two distinct complexes: a TatABC complex, containing multiple copies of TatA, TatB and TatC subunits, and a separate TatA complex, containing only TatA subunits. Substrates initially bind to the TatABC complex, which probably triggers association of the separate TatA complex to form the active translocon.

It localises to the cell inner membrane. Its function is as follows. Part of the twin-arginine translocation (Tat) system that transports large folded proteins containing a characteristic twin-arginine motif in their signal peptide across membranes. TatA could form the protein-conducting channel of the Tat system. This is Sec-independent protein translocase protein TatA from Phenylobacterium zucineum (strain HLK1).